We begin with the raw amino-acid sequence, 86 residues long: uncharacterized protein (86 aa).

2 helical membrane-spanning segments follow: residues 20–38 and 47–63; these read IQFWGFVAATGVLLYSVYL and FSTFLFACVGTAATKGV. Residues 67 to 86 form a disordered region; that stretch reads LSQRREQGKEQGREQGREQE. Over residues 69–86 the composition is skewed to basic and acidic residues; the sequence is QRREQGKEQGREQGREQE.

It is found in the cell membrane. This is an uncharacterized protein from Haemophilus influenzae (strain ATCC 51907 / DSM 11121 / KW20 / Rd).